The following is a 280-amino-acid chain: Tryptophan synthase alpha chain (280 aa).

Catalysis depends on proton acceptor residues E49 and D60.

Belongs to the TrpA family. Tetramer of two alpha and two beta chains.

The enzyme catalyses (1S,2R)-1-C-(indol-3-yl)glycerol 3-phosphate + L-serine = D-glyceraldehyde 3-phosphate + L-tryptophan + H2O. It functions in the pathway amino-acid biosynthesis; L-tryptophan biosynthesis; L-tryptophan from chorismate: step 5/5. Its function is as follows. The alpha subunit is responsible for the aldol cleavage of indoleglycerol phosphate to indole and glyceraldehyde 3-phosphate. In Corynebacterium glutamicum (strain ATCC 13032 / DSM 20300 / JCM 1318 / BCRC 11384 / CCUG 27702 / LMG 3730 / NBRC 12168 / NCIMB 10025 / NRRL B-2784 / 534), this protein is Tryptophan synthase alpha chain.